Here is a 501-residue protein sequence, read N- to C-terminus: Ribose import ATP-binding protein RbsA (501 aa).

2 ABC transporter domains span residues Leu-5 to Lys-241 and Ala-252 to Leu-495. Gly-37 to Ser-44 serves as a coordination point for ATP.

This sequence belongs to the ABC transporter superfamily. Ribose importer (TC 3.A.1.2.1) family. The complex is composed of an ATP-binding protein (RbsA), two transmembrane proteins (RbsC) and a solute-binding protein (RbsB).

The protein resides in the cell inner membrane. The enzyme catalyses D-ribose(out) + ATP + H2O = D-ribose(in) + ADP + phosphate + H(+). Its function is as follows. Part of the ABC transporter complex RbsABC involved in ribose import. Responsible for energy coupling to the transport system. The chain is Ribose import ATP-binding protein RbsA from Shigella sonnei (strain Ss046).